The following is a 480-amino-acid chain: Iroquois-class homeodomain protein IRX-1 (480 aa).

The homeobox; TALE-type DNA-binding region spans 127 to 189; sequence DPGRPKNATR…NARRRLKKEN (63 aa). 3 disordered regions span residues 190–285, 318–354, and 401–480; these read KVTW…LGLV, SLAE…PLQH, and PHGP…LPSA. Positions 210-232 are enriched in acidic residues; sequence TEGDPEKAEDDEEIDLESIDIDQ. Residue Ser-241 is modified to Phosphoserine. Positions 254-263 are enriched in low complexity; the sequence is ARVAPPASAR. A compositionally biased stretch (polar residues) spans 264 to 280; it reads DQSSPLSAAETLKSQDS. Residues 339–351 are compositionally biased toward low complexity; that stretch reads SHASAHGPPSGSP.

This sequence belongs to the TALE/IRO homeobox family. Expressed in specific and overlapping patterns with Irx1 and Irx2 in the developing and adult metanephric kidney. In the adult metanephros, renal expression is found in the loop of Henle in the S3 proximal tubule segment and in the thick ascending limb (TAL) of the distal tubule.

The protein resides in the nucleus. The protein is Iroquois-class homeodomain protein IRX-1 (Irx1) of Mus musculus (Mouse).